Consider the following 82-residue polypeptide: Small ribosomal subunit protein bS20 (82 aa).

Belongs to the bacterial ribosomal protein bS20 family.

In terms of biological role, binds directly to 16S ribosomal RNA. In Streptococcus pyogenes serotype M12 (strain MGAS2096), this protein is Small ribosomal subunit protein bS20.